The sequence spans 225 residues: RNA-binding protein 24 (225 aa).

The 78-residue stretch at 11–88 (TKIFVGGLPY…RKANVNLAYL (78 aa)) folds into the RRM domain.

It is found in the nucleus. The protein resides in the cytoplasm. Its function is as follows. Multifunctional RNA-binding protein involved in the regulation of pre-mRNA splicing, mRNA stability and mRNA translation important for cell fate decision and differentiation. Plays a major role in pre-mRNA alternative splicing regulation. Mediates preferentially muscle-specific exon inclusion in numerous mRNAs important for striated cardiac and skeletal muscle cell differentiation. Binds to intronic splicing enhancer (ISE) composed of stretches of GU-rich motifs localized in flanking intron of exon that will be included by alternative splicing. Involved in embryonic stem cell (ESC) transition to cardiac cell differentiation by promoting pre-mRNA alternative splicing events of several pluripotency and/or differentiation genes. Plays a role in the regulation of mRNA stability and mRNA translation to which it is bound. Involved in myogenic differentiation by regulating MYOG levels. Binds to a huge amount of mRNAs. Involved in embryonic heart development and myogenic differentiation of somitic muscle progenitors. The sequence is that of RNA-binding protein 24 from Gallus gallus (Chicken).